The sequence spans 638 residues: Threonine--tRNA ligase (638 aa).

The TGS domain occupies 1-62 (MYQLTLPDKS…EKNSNIEVLT (62 aa)). The catalytic stretch occupies residues 246 to 537 (DHRKIGKEMD…LIEHYEGKFP (292 aa)). Zn(2+)-binding residues include Cys-337, His-388, and His-514.

Belongs to the class-II aminoacyl-tRNA synthetase family. As to quaternary structure, homodimer. Zn(2+) is required as a cofactor.

The protein resides in the cytoplasm. It catalyses the reaction tRNA(Thr) + L-threonine + ATP = L-threonyl-tRNA(Thr) + AMP + diphosphate + H(+). Functionally, catalyzes the attachment of threonine to tRNA(Thr) in a two-step reaction: L-threonine is first activated by ATP to form Thr-AMP and then transferred to the acceptor end of tRNA(Thr). Also edits incorrectly charged L-seryl-tRNA(Thr). The sequence is that of Threonine--tRNA ligase from Leptospira interrogans serogroup Icterohaemorrhagiae serovar copenhageni (strain Fiocruz L1-130).